A 492-amino-acid chain; its full sequence is Glutamyl-tRNA(Gln) amidotransferase subunit A (492 aa).

Active-site charge relay system residues include Lys80 and Ser155. Catalysis depends on Ser179, which acts as the Acyl-ester intermediate.

It belongs to the amidase family. GatA subfamily. Heterotrimer of A, B and C subunits.

It carries out the reaction L-glutamyl-tRNA(Gln) + L-glutamine + ATP + H2O = L-glutaminyl-tRNA(Gln) + L-glutamate + ADP + phosphate + H(+). Its function is as follows. Allows the formation of correctly charged Gln-tRNA(Gln) through the transamidation of misacylated Glu-tRNA(Gln) in organisms which lack glutaminyl-tRNA synthetase. The reaction takes place in the presence of glutamine and ATP through an activated gamma-phospho-Glu-tRNA(Gln). The chain is Glutamyl-tRNA(Gln) amidotransferase subunit A from Mycobacteroides abscessus (strain ATCC 19977 / DSM 44196 / CCUG 20993 / CIP 104536 / JCM 13569 / NCTC 13031 / TMC 1543 / L948) (Mycobacterium abscessus).